Reading from the N-terminus, the 338-residue chain is Ketol-acid reductoisomerase (NADP(+)) (338 aa).

A KARI N-terminal Rossmann domain is found at 1-181 (MKVYYDSDAD…GGGRAGIIET (181 aa)). NADP(+)-binding positions include 24-27 (YGSQ), Arg-47, Ser-50, Ser-52, and 82-85 (DEHQ). His-107 is a catalytic residue. Position 133 (Gly-133) interacts with NADP(+). One can recognise a KARI C-terminal knotted domain in the interval 182–327 (SFKEETETDL…AKLRAMMPWI (146 aa)). Mg(2+) contacts are provided by Asp-190, Glu-194, Glu-226, and Glu-230. Position 251 (Ser-251) interacts with substrate.

Belongs to the ketol-acid reductoisomerase family. Mg(2+) is required as a cofactor.

The catalysed reaction is (2R)-2,3-dihydroxy-3-methylbutanoate + NADP(+) = (2S)-2-acetolactate + NADPH + H(+). It carries out the reaction (2R,3R)-2,3-dihydroxy-3-methylpentanoate + NADP(+) = (S)-2-ethyl-2-hydroxy-3-oxobutanoate + NADPH + H(+). It functions in the pathway amino-acid biosynthesis; L-isoleucine biosynthesis; L-isoleucine from 2-oxobutanoate: step 2/4. The protein operates within amino-acid biosynthesis; L-valine biosynthesis; L-valine from pyruvate: step 2/4. Its function is as follows. Involved in the biosynthesis of branched-chain amino acids (BCAA). Catalyzes an alkyl-migration followed by a ketol-acid reduction of (S)-2-acetolactate (S2AL) to yield (R)-2,3-dihydroxy-isovalerate. In the isomerase reaction, S2AL is rearranged via a Mg-dependent methyl migration to produce 3-hydroxy-3-methyl-2-ketobutyrate (HMKB). In the reductase reaction, this 2-ketoacid undergoes a metal-dependent reduction by NADPH to yield (R)-2,3-dihydroxy-isovalerate. This chain is Ketol-acid reductoisomerase (NADP(+)), found in Magnetococcus marinus (strain ATCC BAA-1437 / JCM 17883 / MC-1).